A 331-amino-acid chain; its full sequence is Syntaxin-43 (331 aa).

Topologically, residues 1–305 (MATRNRTLLF…KAERTQRQGG (305 aa)) are cytoplasmic. 2 disordered regions span residues 20-45 (VRAPMGSSSSSTLTEHNSLTGAKSGL) and 59-80 (PNRSYAPVSTEDPGNSSRGTIT). Residues 31–40 (TLTEHNSLTG) are compositionally biased toward polar residues. A coiled-coil region spans residues 124-154 (KEDQHQIETLTQEVTFLLKKSEKQLQRLSAA). In terms of domain architecture, t-SNARE coiled-coil homology spans 235 to 297 (EEISIEREKE…DDGLKQLQKA (63 aa)). A helical; Anchor for type IV membrane protein transmembrane segment spans residues 306 to 326 (MVMCASVLVILCFIMLVLLIL). Residues 327–331 (KEILL) are Vesicular-facing.

The protein belongs to the syntaxin family. Part of the t-SNARE complex. As to expression, expressed at low levels in roots, stems, flowers and leaves.

It is found in the golgi apparatus. It localises to the trans-Golgi network membrane. Its function is as follows. Contributes to the regulation of secretory and vacuolar transport pathways in the post-Golgi network, and to the maintenance of the Golgi apparatus and trans-Golgi network (TGN) morphologies. Vesicle trafficking protein that functions in the secretory pathway and mediates liposome fusion. Required for extracellular resistance responses to a fungal pathogen. Also involved in the protection of chloroplasts from salicylic acid-dependent biotic stress. This chain is Syntaxin-43, found in Arabidopsis thaliana (Mouse-ear cress).